The sequence spans 335 residues: MMSIPMELMSIRNPNSTLLYRAHSRPPVKLCAPPRSLLPSRRHFSAPRAVVSYPGIRFGFTSPEVLLNRSVVAFAASHEDSGESGVEVGKEKSDIDVEDDTSKEAWKQTLESFKEQVSKMQSVSSEAYSVNSQKAMTVLKETSEQLRIQAEKAKEELGTKAKVVSEEGREYILKAAEESPSDVKEIVEAFASTEDLKNVSRANDFHVGIPYGLLLLVGGFINFMVSGSIPAIRFGVILGGALFALSLASLKSHRKGESSTKFLKGQMAIVAIIFLRELRLLLSQKSTFLGFFTTLTSGGVLGFYLYKMVVKREKGPTLEDGGEDESSDGFVRSEG.

The N-terminal 72 residues, 1 to 72, are a transit peptide targeting the chloroplast; that stretch reads MMSIPMELMS…PEVLLNRSVV (72 aa). A disordered region spans residues 82-101; that stretch reads GESGVEVGKEKSDIDVEDDT. Basic and acidic residues predominate over residues 88 to 101; sequence VGKEKSDIDVEDDT. A coiled-coil region spans residues 101–160; the sequence is TSKEAWKQTLESFKEQVSKMQSVSSEAYSVNSQKAMTVLKETSEQLRIQAEKAKEELGTK. 3 helical membrane passes run 205 to 225, 228 to 248, and 286 to 306; these read FHVG…NFMV, SIPA…LSLA, and STFL…FYLY. The interval 316–335 is disordered; that stretch reads PTLEDGGEDESSDGFVRSEG.

The protein belongs to the TMEM14 family.

The protein localises to the plastid. Its subcellular location is the chloroplast membrane. May be involved in free fatty acids export from the plastids. This Arabidopsis thaliana (Mouse-ear cress) protein is Protein FATTY ACID EXPORT 3, chloroplastic.